The following is a 332-amino-acid chain: RNA polymerase principal sigma factor HrdD (332 aa).

The interval 1-21 (MATRAVARRQPAASGETGAAG) is disordered. Residues 124–137 (DLIQEGNAGLVRAV) carry the Polymerase core binding motif. The segment at residues 294 to 313 (LTEVGKQHGLTRERIRQIEK) is a DNA-binding region (H-T-H motif).

It belongs to the sigma-70 factor family.

Its function is as follows. Sigma factors are initiation factors that promote the attachment of RNA polymerase to specific initiation sites and are then released. The polypeptide is RNA polymerase principal sigma factor HrdD (hrdD) (Streptomyces griseus).